The following is a 247-amino-acid chain: PF03932 family protein CutC (247 aa).

It belongs to the CutC family.

It is found in the cytoplasm. This is PF03932 family protein CutC from Vibrio parahaemolyticus serotype O3:K6 (strain RIMD 2210633).